We begin with the raw amino-acid sequence, 351 residues long: Ribosomal RNA large subunit methyltransferase M (351 aa).

S-adenosyl-L-methionine contacts are provided by residues serine 186, 219–222, aspartate 238, aspartate 258, and aspartate 274; that span reads APGG. The active-site Proton acceptor is the lysine 303.

The protein belongs to the class I-like SAM-binding methyltransferase superfamily. RNA methyltransferase RlmE family. RlmM subfamily. In terms of assembly, monomer.

It localises to the cytoplasm. It catalyses the reaction cytidine(2498) in 23S rRNA + S-adenosyl-L-methionine = 2'-O-methylcytidine(2498) in 23S rRNA + S-adenosyl-L-homocysteine + H(+). In terms of biological role, catalyzes the 2'-O-methylation at nucleotide C2498 in 23S rRNA. The protein is Ribosomal RNA large subunit methyltransferase M of Xylella fastidiosa (strain M12).